The chain runs to 296 residues: Glycine--tRNA ligase alpha subunit (296 aa).

Belongs to the class-II aminoacyl-tRNA synthetase family. Tetramer of two alpha and two beta subunits.

The protein localises to the cytoplasm. The enzyme catalyses tRNA(Gly) + glycine + ATP = glycyl-tRNA(Gly) + AMP + diphosphate. This is Glycine--tRNA ligase alpha subunit from Prochlorococcus marinus (strain SARG / CCMP1375 / SS120).